A 163-amino-acid chain; its full sequence is Retinoic acid receptor responder protein 2 (163 aa).

The first 20 residues, 1-20, serve as a signal peptide directing secretion; sequence MRRLLIPLALWLGAVGVGVA. 3 disulfides stabilise this stretch: C77-C87, C98-C117, and C101-C135. Positions 158–163 are excised as a propeptide; that stretch reads KALPRS.

In terms of processing, secreted in an inactive precursor form, prochemerin, which is proteolytically processed by a variety of extracellular proteases to generate forms with differing levels of bioactivity. For example, the removal of six amino acids results in chemerin-157, which exhibits the highest activity, while removal of seven amino acids results in chemerin-156 which has slightly less activity. Some proteases are able to cleave at more than one site and chemerin forms may be sequentially processed by different enzymes to modulate activity levels. The coordinated expression and activity of chemerin-modifying enzymes is essential for regulating its bioactivation, inactivation and, consequently, biological function. Cathepsin G cleaves seven C-terminal amino acids from prochemerin (chemerin-156), elastase is able to cleave six (chemerin-157), eight (chemerin-155) or eleven (chemerin-152), plasmin cleaves five amino acids (chemerin-158), and tryptase cleaves five (chemerin-158) or eight (chemerin-155). Multiple cleavages might be required to fully activate chemerin, with an initial tryptase cleavage resulting in chemerin with low activity (chemerin-158), and a second cleavage by carboxypeptidase N or B producing highly active chemerin (chemerin-157).

It is found in the secreted. Adipocyte-secreted protein (adipokine) that regulates adipogenesis, metabolism and inflammation through activation of the chemokine-like receptor 1 (CMKLR1). Also acts as a ligand for CMKLR2. Can also bind to C-C chemokine receptor-like 2 (CCRL2), but with a lower affinity than it does to CMKLR1 or CMKLR2. Positively regulates adipocyte differentiation, modulates the expression of adipocyte genes involved in lipid and glucose metabolism and might play a role in angiogenesis, a process essential for the expansion of white adipose tissue. Also acts as a pro-inflammatory adipokine, causing an increase in secretion of pro-inflammatory and prodiabetic adipokines, which further impair adipose tissue metabolic function and have negative systemic effects including impaired insulin sensitivity, altered glucose and lipid metabolism, and a decrease in vascular function in other tissues. Can have both pro- and anti-inflammatory properties depending on the modality of enzymatic cleavage by different classes of proteases. Acts as a chemotactic factor for leukocyte populations expressing CMKLR1, particularly immature plasmacytoid dendritic cells, but also immature myeloid DCs, macrophages and natural killer cells. Exerts an anti-inflammatory role by preventing TNF/TNFA-induced VCAM1 expression and monocytes adhesion in vascular endothelial cells. The effect is mediated via inhibiting activation of NF-kappa-B and CRK/p38 through stimulation of AKT1/NOS3 signaling and nitric oxide production. Exhibits an antimicrobial function in the skin. The sequence is that of Retinoic acid receptor responder protein 2 (RARRES2) from Pongo abelii (Sumatran orangutan).